Reading from the N-terminus, the 235-residue chain is Glycerol-3-phosphate acyltransferase (235 aa).

6 helical membrane passes run 4–24 (LIAILAISYLVGAIPTGIMAG), 56–76 (AVTLLDILKGIVAAVSIVAFF), 94–114 (LLAGMSAVIGHVFTVFAGFKG), 122–142 (AGMLIGIAPVSMLIVIGIFLL), 152–172 (VASILAAIAFPLIIAIRKYIF), and 191–211 (FHDSLDYHLMIFGLIVALAIL).

Belongs to the PlsY family. Probably interacts with PlsX.

It is found in the cell inner membrane. It carries out the reaction an acyl phosphate + sn-glycerol 3-phosphate = a 1-acyl-sn-glycero-3-phosphate + phosphate. The protein operates within lipid metabolism; phospholipid metabolism. Catalyzes the transfer of an acyl group from acyl-phosphate (acyl-PO(4)) to glycerol-3-phosphate (G3P) to form lysophosphatidic acid (LPA). This enzyme utilizes acyl-phosphate as fatty acyl donor, but not acyl-CoA or acyl-ACP. The chain is Glycerol-3-phosphate acyltransferase from Chlorobium phaeobacteroides (strain DSM 266 / SMG 266 / 2430).